Reading from the N-terminus, the 89-residue chain is Small ribosomal subunit protein uS15 (89 aa).

Basic and acidic residues predominate over residues 1–21 (MSITPERKQEMIKDYATKEGD). The segment at 1-23 (MSITPERKQEMIKDYATKEGDTG) is disordered.

Belongs to the universal ribosomal protein uS15 family. Part of the 30S ribosomal subunit. Forms a bridge to the 50S subunit in the 70S ribosome, contacting the 23S rRNA.

One of the primary rRNA binding proteins, it binds directly to 16S rRNA where it helps nucleate assembly of the platform of the 30S subunit by binding and bridging several RNA helices of the 16S rRNA. Its function is as follows. Forms an intersubunit bridge (bridge B4) with the 23S rRNA of the 50S subunit in the ribosome. This is Small ribosomal subunit protein uS15 from Rhodospirillum rubrum (strain ATCC 11170 / ATH 1.1.1 / DSM 467 / LMG 4362 / NCIMB 8255 / S1).